The chain runs to 773 residues: Ethylene receptor 2 (773 aa).

Transmembrane regions (helical) follow at residues 4-24 (EIASWLLILSMVVFVSPVLAI), 53-73 (VSDFLIAVAYFSIPIELLYFV), 82-102 (WVLFEFIAFIVLCGMTHLLHG), and 122-142 (LTALVSCATAITLITLIPLLL). Cys94 and His98 together coordinate Cu cation. The 145-residue stretch at 187 to 331 (DRHTILYTTL…VVADQVTVAL (145 aa)) folds into the GAF domain. One can recognise a Histidine kinase domain in the interval 374–614 (TMSEGMRRPM…PETMSLLLRF (241 aa)). Residues 647–766 (QVLLVDTNDS…AMESELRRVL (120 aa)) form the Response regulatory domain. Asp702 is subject to 4-aspartylphosphate. A Glycyl lysine isopeptide (Lys-Gly) (interchain with G-Cter in ubiquitin) cross-link involves residue Lys751.

This sequence belongs to the ethylene receptor family. In terms of assembly, heteromer with ETR1. Binds to MRF3/ECIP1. Cu cation serves as cofactor. Post-translationally, autophosphorylated predominantly on Ser residues. Expressed in seedlings, roots, leaves, flowers, mature siliques, shoot apical meristems, leaf primordia, inflorescence meristems, young floral meristems, developing petals, carpels and ovules. Low expression in stamens.

It localises to the endoplasmic reticulum membrane. Ethylene receptor related to bacterial two-component regulators. Acts as a redundant negative regulator of ethylene signaling. The polypeptide is Ethylene receptor 2 (Arabidopsis thaliana (Mouse-ear cress)).